A 503-amino-acid chain; its full sequence is Probable cytosol aminopeptidase (503 aa).

Residues K274 and D279 each contribute to the Mn(2+) site. The active site involves K286. Mn(2+)-binding residues include D297, D356, and E358. R360 is an active-site residue.

Belongs to the peptidase M17 family. Requires Mn(2+) as cofactor.

The protein localises to the cytoplasm. The catalysed reaction is Release of an N-terminal amino acid, Xaa-|-Yaa-, in which Xaa is preferably Leu, but may be other amino acids including Pro although not Arg or Lys, and Yaa may be Pro. Amino acid amides and methyl esters are also readily hydrolyzed, but rates on arylamides are exceedingly low.. It catalyses the reaction Release of an N-terminal amino acid, preferentially leucine, but not glutamic or aspartic acids.. Functionally, presumably involved in the processing and regular turnover of intracellular proteins. Catalyzes the removal of unsubstituted N-terminal amino acids from various peptides. The protein is Probable cytosol aminopeptidase of Burkholderia pseudomallei (strain 1710b).